A 90-amino-acid chain; its full sequence is Molybdopterin synthase sulfur carrier subunit (90 aa).

Glycine 90 carries the 1-thioglycine; alternate modification. Glycyl adenylate; alternate is present on glycine 90.

The protein belongs to the MoaD family. MOCS2A subfamily. In terms of assembly, heterotetramer; composed of 2 small (Mocs2A) and 2 large (Mocs2B) subunits. In terms of processing, C-terminal thiocarboxylation occurs in 2 steps, it is first acyl-adenylated (-COAMP) via the hesA/moeB/thiF part of MOCS3, then thiocarboxylated (-COSH) via the rhodanese domain of MOCS3.

The protein resides in the cytoplasm. It participates in cofactor biosynthesis; molybdopterin biosynthesis. Functionally, acts as a sulfur carrier required for molybdopterin biosynthesis. Component of the molybdopterin synthase complex that catalyzes the conversion of precursor Z into molybdopterin by mediating the incorporation of 2 sulfur atoms into precursor Z to generate a dithiolene group. In the complex, serves as sulfur donor by being thiocarboxylated (-COSH) at its C-terminus by MOCS3. After interaction with Mocs2B, the sulfur is then transferred to precursor Z to form molybdopterin. The protein is Molybdopterin synthase sulfur carrier subunit of Drosophila simulans (Fruit fly).